A 964-amino-acid chain; its full sequence is Phosphoenolpyruvate carboxylase (964 aa).

S11 carries the phosphoserine modification. Catalysis depends on residues H172 and K600.

Belongs to the PEPCase type 1 family. Homotetramer. It depends on Mg(2+) as a cofactor.

Its subcellular location is the cytoplasm. The enzyme catalyses oxaloacetate + phosphate = phosphoenolpyruvate + hydrogencarbonate. It participates in photosynthesis; C4 acid pathway. With respect to regulation, by light-reversible phosphorylation. In terms of biological role, through the carboxylation of phosphoenolpyruvate (PEP) it forms oxaloacetate, a four-carbon dicarboxylic acid source for the tricarboxylic acid cycle. The sequence is that of Phosphoenolpyruvate carboxylase (PPC) from Nicotiana tabacum (Common tobacco).